The sequence spans 323 residues: Macrolide efflux protein A (323 aa).

9 helical membrane-spanning segments follow: residues 6 to 26 (VLSMSLLGFLPYAVFGPAIGV), 51 to 71 (LTIVAFYMELPVWMVMIVLFI), 105 to 125 (SLQSISYIVSPAVAALLYSVW), 128 to 148 (NAIIAIDVLGAVIASITVLIV), 182 to 202 (FALLLVGTLYMFVYMPINALF), 219 to 239 (ITEISFASGMLIGGLLLGLFG), 245 to 265 (ILLITASIFMMGISLTISGLL), 270 to 290 (FFIFVVCSAIMGLSVPFYSGV), and 303 to 323 (YLGRVFSLTGSIMSLAMPIGL).

Belongs to the major facilitator superfamily. Drug:H(+) antiporter-3 (DHA3) (TC 2.A.1.21) family.

It is found in the cell membrane. Functionally, confers resistance to 14-membered macrolides including erythromycin and to 15-membered macrolides but not to 16-membered macrolides, lincosamides or analogs of streptogramin B. May function as an efflux pump to regulate intracellular macrolide levels. This Enterococcus faecalis (Streptococcus faecalis) protein is Macrolide efflux protein A (mefA).